We begin with the raw amino-acid sequence, 427 residues long: Adenylosuccinate synthetase (427 aa).

GTP is bound by residues G12–K18 and G40–T42. D13 serves as the catalytic Proton acceptor. D13 and G40 together coordinate Mg(2+). IMP contacts are provided by residues D13–K16, N38–H41, T128, R142, Q223, T238, and R302. Residue H41 is the Proton donor of the active site. A substrate-binding site is contributed by T298–R304. GTP contacts are provided by residues R304, K330–D332, and A412–G414.

The protein belongs to the adenylosuccinate synthetase family. In terms of assembly, homodimer. It depends on Mg(2+) as a cofactor.

The protein localises to the cytoplasm. It carries out the reaction IMP + L-aspartate + GTP = N(6)-(1,2-dicarboxyethyl)-AMP + GDP + phosphate + 2 H(+). Its pathway is purine metabolism; AMP biosynthesis via de novo pathway; AMP from IMP: step 1/2. Its function is as follows. Plays an important role in the de novo pathway of purine nucleotide biosynthesis. Catalyzes the first committed step in the biosynthesis of AMP from IMP. The sequence is that of Adenylosuccinate synthetase from Moorella thermoacetica (strain ATCC 39073 / JCM 9320).